Here is a 308-residue protein sequence, read N- to C-terminus: MNVRGRVAPRRVTGRAMSTLLAYLALTKPRVIELLLVTAIPAMLLADRGAIHPLLMLNTLVGGMMAAAGANTLNCVADADIDKVMKRTARRPLAREAVPTRNALALGLTLTVISFFWLWCATNLLAGVLALVTVAFYVFVYTLWLKRRTSQNVVWGGAAGCMPVMIGWSAITGTIAWPALAMFAIIFFWTPPHTWALAMRYKQDYQVAGVPMLPAVATERQVTKQILIYTWLTVAATLVLALATSWLYGAVALVAGGWFLTMAHQLYAGVRAGEPVRPLRLFLQSNNYLAVVFCALAVDSVIALPTLH.

8 helical membrane passes run leucine 20–isoleucine 40, alanine 50–alanine 70, asparagine 102–threonine 122, leucine 124–tryptophan 144, threonine 149–serine 169, alanine 170–threonine 190, leucine 227–glycine 249, and tyrosine 288–histidine 308.

Belongs to the UbiA prenyltransferase family. Protoheme IX farnesyltransferase subfamily.

Its subcellular location is the cell membrane. The catalysed reaction is heme b + (2E,6E)-farnesyl diphosphate + H2O = Fe(II)-heme o + diphosphate. It functions in the pathway porphyrin-containing compound metabolism; heme O biosynthesis; heme O from protoheme: step 1/1. Converts heme B (protoheme IX) to heme O by substitution of the vinyl group on carbon 2 of heme B porphyrin ring with a hydroxyethyl farnesyl side group. This Mycobacterium tuberculosis (strain ATCC 25618 / H37Rv) protein is Protoheme IX farnesyltransferase.